A 648-amino-acid polypeptide reads, in one-letter code: Leucine-rich repeat transmembrane protein FLRT3 (648 aa).

The signal sequence occupies residues 1 to 28 (MSTETWNLFVAWAQLLLLFRISPQYVNA). At 29 to 527 (KPCPSVCRCD…KEPYKNSSLP (499 aa)) the chain is on the extracellular side. The region spanning 30–62 (PCPSVCRCDGGFIYCNDRDLTSIPSGIPDDATT) is the LRRNT domain. 2 disulfides stabilise this stretch: cysteine 31–cysteine 37 and cysteine 35–cysteine 44. 10 LRR repeats span residues 58–82 (DDAT…LRGL), 83–105 (DKVE…LPKN), 107–126 (KELH…ALSQ), 127–152 (IPSI…AFRD), 154–179 (IFLR…TIEE), 181–197 (RLDD…SLQD), 198–223 (LTNL…VFMN), 225–246 (INLT…NLPG), 247–269 (TNLR…AFAD), and 270–293 (LTQL…IFDD). Residue asparagine 226 is glycosylated (N-linked (GlcNAc...) asparagine). Residues 305–356 (NPWYCGCKMKWVRDWLQSLPSKVNVRGLMCQAPERVRGMTIKDLNKELFDCK) enclose the LRRCT domain. An intrachain disulfide couples cysteine 309 to cysteine 334. In terms of domain architecture, Fibronectin type-III spans 409–503 (KIITIQVKSI…VCIETETAPL (95 aa)). The helical transmembrane segment at 528–548 (LAAIIGGAVALVAITLLALVC) threads the bilayer. Over 549-648 (WYVHRNGSLF…GIPDSDHSHS (100 aa)) the chain is Cytoplasmic. Low complexity predominate over residues 624-633 (NSHSESSSNR). Residues 624 to 648 (NSHSESSSNRSYRDSGIPDSDHSHS) form a disordered region.

In terms of assembly, interacts with fgfr1 and fgfr4. Interacts with rnd1, cdh1 and pcdh8. Interacts (via extracellular domain) with unc5b and unc5d (via extracellular domain). Post-translationally, N-glycosylated. Proteolytic cleavage in the juxtamembrane region gives rise to a soluble ectodomain. Cleavage is probably effected by a metalloprotease.

It localises to the cell membrane. The protein localises to the endoplasmic reticulum membrane. The protein resides in the cell junction. It is found in the focal adhesion. Its subcellular location is the secreted. It localises to the cell projection. The protein localises to the axon. The protein resides in the growth cone membrane. Functions in cell-cell adhesion, cell migration and axon guidance, exerting an attractive or repulsive role depending on its interaction partners. Modulates cadherin-dependent cell-cell adhesion and cell sorting. Plays a role in the spatial organization of brain neurons. Plays a role in vascular development. Plays a role in cell-cell adhesion via its interaction with latrophilins that are expressed at the surface of adjacent cells. Mediates axon attraction towards cells expressing ntn1. mediates axon growth cone collapse and plays a repulsive role in neuron guidance via its interaction with unc-5 family members. Plays a role in the regulation of the density of glutamaergic synapses. Plays a role in signaling cascades downstream of fgfr1, and possibly also other fgfr family members. Plays a role in embryonic morphogenesis, but not in embryonic patterning. The sequence is that of Leucine-rich repeat transmembrane protein FLRT3 from Xenopus tropicalis (Western clawed frog).